Here is a 331-residue protein sequence, read N- to C-terminus: Adenosine deaminase (331 aa).

Zn(2+) is bound by residues H12 and H14. The substrate site is built by H14, D16, and G170. H197 is a Zn(2+) binding site. E200 acts as the Proton donor in catalysis. D278 is a binding site for Zn(2+). A substrate-binding site is contributed by D279.

This sequence belongs to the metallo-dependent hydrolases superfamily. Adenosine and AMP deaminases family. Adenosine deaminase subfamily. Zn(2+) is required as a cofactor.

It catalyses the reaction adenosine + H2O + H(+) = inosine + NH4(+). It carries out the reaction 2'-deoxyadenosine + H2O + H(+) = 2'-deoxyinosine + NH4(+). Catalyzes the hydrolytic deamination of adenosine and 2-deoxyadenosine. In Shewanella denitrificans (strain OS217 / ATCC BAA-1090 / DSM 15013), this protein is Adenosine deaminase.